Consider the following 184-residue polypeptide: Bifunctional protein PyrR (184 aa).

The PRPP-binding signature appears at 98–110; sequence VVLVDDVLYTGRT.

Belongs to the purine/pyrimidine phosphoribosyltransferase family. PyrR subfamily.

The catalysed reaction is UMP + diphosphate = 5-phospho-alpha-D-ribose 1-diphosphate + uracil. In terms of biological role, regulates the transcription of the pyrimidine nucleotide (pyr) operon in response to exogenous pyrimidines. Its function is as follows. Also displays a weak uracil phosphoribosyltransferase activity which is not physiologically significant. This Roseiflexus castenholzii (strain DSM 13941 / HLO8) protein is Bifunctional protein PyrR.